The primary structure comprises 187 residues: GTP cyclohydrolase 1 (187 aa).

Residues Cys-81, His-84, and Cys-152 each coordinate Zn(2+).

Belongs to the GTP cyclohydrolase I family. In terms of assembly, toroid-shaped homodecamer, composed of two pentamers of five dimers.

It catalyses the reaction GTP + H2O = 7,8-dihydroneopterin 3'-triphosphate + formate + H(+). It participates in cofactor biosynthesis; 7,8-dihydroneopterin triphosphate biosynthesis; 7,8-dihydroneopterin triphosphate from GTP: step 1/1. The polypeptide is GTP cyclohydrolase 1 (Pyrobaculum aerophilum (strain ATCC 51768 / DSM 7523 / JCM 9630 / CIP 104966 / NBRC 100827 / IM2)).